The primary structure comprises 97 residues: Conotoxin Cal6.1e (97 aa).

The first 22 residues, 1–22, serve as a signal peptide directing secretion; sequence MKLTTVLIVAVLVLAACQFTVT. The segment at 23-49 is disordered; that stretch reads DNSGDDTENPSLRSAGENQNPDSTKTI. Positions 23 to 60 are excised as a propeptide; that stretch reads DNSGDDTENPSLRSAGENQNPDSTKTITARATRARTNM. Over residues 31–45 the composition is skewed to polar residues; sequence NPSLRSAGENQNPDS. 3 cysteine pairs are disulfide-bonded: C71/C87, C78/C91, and C86/C96.

The protein belongs to the conotoxin O1 superfamily. Expressed by the venom duct.

The protein resides in the secreted. In terms of biological role, probable neurotoxin with unknown target. Possibly targets ion channels. In Californiconus californicus (California cone), this protein is Conotoxin Cal6.1e.